The sequence spans 555 residues: MQSCESSGDSADDPLSRGLRRRGQPRVVVIGAGLAGLAAARALLEQGFTDVTVLEASSHIGGRVQSVRLGDTTFELGATWIHGSHGNPIYQLAEANGLLEETTDGERSVGRISLYSKNGVACYLTNRGCRIPKDVVEEFSDLYNEVYNMTQEFFRHGKPVNAESQNSVGVFTREKVRNRIRDDPDDTEATKRLKLAMIQQYLKVESCESSSHSIDEVSLSAFGEWTEIPGAHHIIPSGFMRVVELLAEGIPPHVIQLGKPVRCIHWDQASAHPRGPEIEPRGEGDHNHDTGEGGQSGENPQQGRWDEDEPWPVVVECEDCEVIPADHVIVTVSLGVLKRQYTSFFRPCLPTEKVAAIHRLGIGTTDKIFLEFEEPFWGPECNSLQFVWEDEAESCTLTYPPELWYRKICGFDVLYPPERYGHVLSGWICGEEALVMERCDDEAVAEICTEMLRQFTGNPNIPKPRRILRSAWGSNPYFRGSYSYTQVGSSGADVEKLAKPLPYTESSKTAPMQVLFSGEATHRKYYSTTHGALLSGQREAARLIEMYRDLFQQGP.

FAD is bound by residues alanine 35, glutamate 55, arginine 63, 79–80 (TW), and valine 261. Positions 271 to 307 (AHPRGPEIEPRGEGDHNHDTGEGGQSGENPQQGRWDE) are disordered. Over residues 274-291 (RGPEIEPRGEGDHNHDTG) the composition is skewed to basic and acidic residues. FAD-binding positions include glutamate 519 and 528–529 (TT).

Belongs to the flavin monoamine oxidase family. It depends on FAD as a cofactor. In terms of tissue distribution, widely expressed. Isoform 1 and isoform 2 are expressed at higher level in brain and skeletal muscle. Isoform 7 is found in brain and spleen, isoform 10 is widely expressed but found at lower level in heart, kidney, liver and lung.

The protein localises to the cytoplasm. It is found in the nucleus. It carries out the reaction spermine + O2 + H2O = 3-aminopropanal + spermidine + H2O2. Its pathway is amine and polyamine degradation; spermine degradation. Flavoenzyme which catalyzes the oxidation of spermine to spermidine. Can also use N(1)-acetylspermine and spermidine as substrates, with different affinity depending on the isoform (isozyme) and on the experimental conditions. Plays an important role in the regulation of polyamine intracellular concentration and has the potential to act as a determinant of cellular sensitivity to the antitumor polyamine analogs. May contribute to beta-alanine production via aldehyde dehydrogenase conversion of 3-amino-propanal. In Mus musculus (Mouse), this protein is Spermine oxidase (Smox).